The chain runs to 387 residues: Succinate--CoA ligase [ADP-forming] subunit beta (387 aa).

The ATP-grasp domain occupies 9–236; it reads KELFAKHNVP…KDATDPLELK (228 aa). ATP is bound by residues lysine 45, 52 to 54, serine 94, and glutamate 99; that span reads GRG. Mg(2+)-binding residues include asparagine 191 and aspartate 205. Residues asparagine 256 and 318–320 each bind substrate; that span reads GIT.

This sequence belongs to the succinate/malate CoA ligase beta subunit family. Heterotetramer of two alpha and two beta subunits. It depends on Mg(2+) as a cofactor.

It carries out the reaction succinate + ATP + CoA = succinyl-CoA + ADP + phosphate. The catalysed reaction is GTP + succinate + CoA = succinyl-CoA + GDP + phosphate. The protein operates within carbohydrate metabolism; tricarboxylic acid cycle; succinate from succinyl-CoA (ligase route): step 1/1. Its function is as follows. Succinyl-CoA synthetase functions in the citric acid cycle (TCA), coupling the hydrolysis of succinyl-CoA to the synthesis of either ATP or GTP and thus represents the only step of substrate-level phosphorylation in the TCA. The beta subunit provides nucleotide specificity of the enzyme and binds the substrate succinate, while the binding sites for coenzyme A and phosphate are found in the alpha subunit. The sequence is that of Succinate--CoA ligase [ADP-forming] subunit beta from Mycolicibacterium vanbaalenii (strain DSM 7251 / JCM 13017 / BCRC 16820 / KCTC 9966 / NRRL B-24157 / PYR-1) (Mycobacterium vanbaalenii).